A 640-amino-acid polypeptide reads, in one-letter code: Threonine--tRNA ligase (640 aa).

A TGS domain is found at 1–61 (MPIITLPDGS…DRDATLQIIT (61 aa)). Positions 242 to 533 (DHRRIGKQLD…LIEHYAGAFP (292 aa)) are catalytic. Positions 333, 384, and 510 each coordinate Zn(2+).

It belongs to the class-II aminoacyl-tRNA synthetase family. As to quaternary structure, homodimer. Zn(2+) serves as cofactor.

The protein resides in the cytoplasm. The enzyme catalyses tRNA(Thr) + L-threonine + ATP = L-threonyl-tRNA(Thr) + AMP + diphosphate + H(+). Catalyzes the attachment of threonine to tRNA(Thr) in a two-step reaction: L-threonine is first activated by ATP to form Thr-AMP and then transferred to the acceptor end of tRNA(Thr). Also edits incorrectly charged L-seryl-tRNA(Thr). The chain is Threonine--tRNA ligase from Pseudomonas aeruginosa (strain LESB58).